The following is a 1075-amino-acid chain: MLRNGNEGMSTIPGFSQIQFEGFCRFINQGLAEELEKFPTIKDPDHEISFQLFAKGYQLLEPSIKERDAVYESLTYSSELYVSARLIFGFDVQKQTISIGNIPIMNSLGTFIINGIYRIVINQILLSPGIYYRSELDHKGISIYTGTIISDWGGRSELAIDKKERIWARVSRKQKISILVLSSAMGSNLKEILDNVSYPEIFLSFPNAKEKKRIESKEKAILEFYQQFACVGGDLVFSESLCEELQKKFFQQKCELGRIGRRNMNRRLNLDIPQNSTFLLPRDVLAATDHLIGMKFETGILDDDDMNHLKNKRIRSVADLLQDQFGLALGRLQHAVQKTIRRVFIRQSKPTPQTLVTPTSTSILLITTYETFFGTYPLSQVFDQTNPLTQTVHGRKVSCLGPGGLTGRTASFRSRDIHPSHYGRICPIDTSEGINVGLTGSLAIHARIDHWWGSVESPFYEISEKAKKKKERQVVYLSPNRDEYYMIAAGNSLSLNRGIQEEQVVPARYRQEFLTIAWEQIHVRSIFPFQYFSIGGSLIPFIEHNDANRALMSSNMQRQAVPLSRSEKCIVGTGLERQTALDSRVSVIAEREGKIISTNSHKILLSSSGKTISIPLVTHRRSNKNTCMHQKPRVPRGKSIKKGQILAEGAATVGGELALGKNVLVAYMPWEGYNFEDAVLISERLVYEDIYTSFHIRKYEIQTDTTSQGSAEKITKEIPHLEEHLLRNLDRNGVVKLGSWVETGDILVGKLTPQIASESSYIAEAGLLRAIFGLEVSTSKETSLKLPIGGRGRVIDVKWIQRDPLDIMVRVYILQKREIKVGDKVAGRHGNKGIISKILPRQDMPYLQDGTPVDMVFNPLGVPSRMNVGQIFESSLGLAGDLLKKHYRIAPFDERYEQEASRKLVFSELYEASKQTKNPWVFEPEYPGKSRIFDGRTGDPFEQPVLIGKSYILKLIHQVDEKIHGRSTGPYSLVTQQPVRGRAKQGGQRIGEMEVWALEGFGVAHILQEILTYKSDHLIARQEILNATIWGKRVPNHEDPPESFRVLVRELRSLALELNHFLVSQKNFQVNREEV.

This sequence belongs to the RNA polymerase beta chain family. In terms of assembly, in plastids the minimal PEP RNA polymerase catalytic core is composed of four subunits: alpha, beta, beta', and beta''. When a (nuclear-encoded) sigma factor is associated with the core the holoenzyme is formed, which can initiate transcription.

Its subcellular location is the plastid. The protein localises to the chloroplast. The enzyme catalyses RNA(n) + a ribonucleoside 5'-triphosphate = RNA(n+1) + diphosphate. Its function is as follows. DNA-dependent RNA polymerase catalyzes the transcription of DNA into RNA using the four ribonucleoside triphosphates as substrates. This Oryza sativa (Rice) protein is DNA-directed RNA polymerase subunit beta.